The following is a 223-amino-acid chain: Phosphoribosylformylglycinamidine synthase subunit PurQ (223 aa).

Positions 2 to 223 constitute a Glutamine amidotransferase type-1 domain; sequence KTAIIQLPGL…FQSALELAKG (222 aa). Catalysis depends on C86, which acts as the Nucleophile. Residues H196 and E198 contribute to the active site.

Part of the FGAM synthase complex composed of 1 PurL, 1 PurQ and 2 PurS subunits.

Its subcellular location is the cytoplasm. It catalyses the reaction N(2)-formyl-N(1)-(5-phospho-beta-D-ribosyl)glycinamide + L-glutamine + ATP + H2O = 2-formamido-N(1)-(5-O-phospho-beta-D-ribosyl)acetamidine + L-glutamate + ADP + phosphate + H(+). It carries out the reaction L-glutamine + H2O = L-glutamate + NH4(+). It functions in the pathway purine metabolism; IMP biosynthesis via de novo pathway; 5-amino-1-(5-phospho-D-ribosyl)imidazole from N(2)-formyl-N(1)-(5-phospho-D-ribosyl)glycinamide: step 1/2. In terms of biological role, part of the phosphoribosylformylglycinamidine synthase complex involved in the purines biosynthetic pathway. Catalyzes the ATP-dependent conversion of formylglycinamide ribonucleotide (FGAR) and glutamine to yield formylglycinamidine ribonucleotide (FGAM) and glutamate. The FGAM synthase complex is composed of three subunits. PurQ produces an ammonia molecule by converting glutamine to glutamate. PurL transfers the ammonia molecule to FGAR to form FGAM in an ATP-dependent manner. PurS interacts with PurQ and PurL and is thought to assist in the transfer of the ammonia molecule from PurQ to PurL. This chain is Phosphoribosylformylglycinamidine synthase subunit PurQ, found in Bartonella henselae (strain ATCC 49882 / DSM 28221 / CCUG 30454 / Houston 1) (Rochalimaea henselae).